A 241-amino-acid polypeptide reads, in one-letter code: Endothelial protein C receptor (241 aa).

Positions 1–20 (MLTKFLSLLLLLLLLGCAFC) are cleaved as a signal peptide. Over 21–213 (NSDGSQSLHM…GSQTGRSYTS (193 aa)) the chain is Extracellular. Residues asparagine 47, asparagine 64, asparagine 139, asparagine 165, and asparagine 175 are each glycosylated (N-linked (GlcNAc...) asparagine). The chain crosses the membrane as a helical span at residues 214 to 234 (LVLGILMGCFIIAGVAVGIFL). Over 235–241 (CTGGRRC) the chain is Cytoplasmic.

It is found in the membrane. Functionally, binds activated protein C. Enhances protein C activation by the thrombin-thrombomodulin complex; plays a role in the protein C pathway controlling blood coagulation. This chain is Endothelial protein C receptor (Procr), found in Rattus norvegicus (Rat).